The sequence spans 658 residues: Threonine--tRNA ligase (658 aa).

Residues 1-64 (MSCSVSLSFP…GQSGQIEIIT (64 aa)) enclose the TGS domain. A catalytic region spans residues 246–549 (DHRRLGREMD…LIENFAGHMP (304 aa)). Zn(2+) contacts are provided by Cys343, His394, and His526.

Belongs to the class-II aminoacyl-tRNA synthetase family. In terms of assembly, homodimer. The cofactor is Zn(2+).

The protein localises to the cytoplasm. The catalysed reaction is tRNA(Thr) + L-threonine + ATP = L-threonyl-tRNA(Thr) + AMP + diphosphate + H(+). Its function is as follows. Catalyzes the attachment of threonine to tRNA(Thr) in a two-step reaction: L-threonine is first activated by ATP to form Thr-AMP and then transferred to the acceptor end of tRNA(Thr). Also edits incorrectly charged L-seryl-tRNA(Thr). This Bartonella quintana (strain Toulouse) (Rochalimaea quintana) protein is Threonine--tRNA ligase.